The primary structure comprises 112 residues: Protein FAM32A (112 aa).

Residues 23–56 (TKRKKKKKDKDKAKMLEAMGTSKKSEEEKRRCLD) form a disordered region. The segment covering 45–56 (KKSEEEKRRCLD) has biased composition (basic and acidic residues).

The protein belongs to the FAM32 family. As to expression, widely expressed, with highest level in pancreas and lowest in muscle.

It localises to the nucleus. Functionally, may induce G2 arrest and apoptosis. May also increase cell sensitivity to apoptotic stimuli. In cell lines, may play a role in the inhibition of anchor-independent cell growth. The protein is Protein FAM32A (Fam32a) of Mus musculus (Mouse).